Here is a 711-residue protein sequence, read N- to C-terminus: Polyribonucleotide nucleotidyltransferase (711 aa).

Mg(2+)-binding residues include D486 and D492. The KH domain maps to 553–612 (PRIHTIKINPDKIKDVIGKGGSVIRALTEETGTTIEIEDDGTVKIAATDGEKAKHAIRRI). The 69-residue stretch at 622–690 (GRIYNGKVTR…RQGRVRLSIK (69 aa)) folds into the S1 motif domain. The interval 690–711 (KEATEQSQPAAAPEAPAAEQGE) is disordered. A compositionally biased stretch (low complexity) spans 694–711 (EQSQPAAAPEAPAAEQGE).

The protein belongs to the polyribonucleotide nucleotidyltransferase family. Component of the RNA degradosome, which is a multiprotein complex involved in RNA processing and mRNA degradation. Mg(2+) serves as cofactor.

Its subcellular location is the cytoplasm. It carries out the reaction RNA(n+1) + phosphate = RNA(n) + a ribonucleoside 5'-diphosphate. Its function is as follows. Involved in mRNA degradation. Catalyzes the phosphorolysis of single-stranded polyribonucleotides processively in the 3'- to 5'-direction. This is Polyribonucleotide nucleotidyltransferase from Citrobacter koseri (strain ATCC BAA-895 / CDC 4225-83 / SGSC4696).